Reading from the N-terminus, the 300-residue chain is Porphobilinogen deaminase (300 aa).

Cysteine 239 carries the S-(dipyrrolylmethanemethyl)cysteine modification.

Belongs to the HMBS family. As to quaternary structure, monomer. Requires dipyrromethane as cofactor.

The catalysed reaction is 4 porphobilinogen + H2O = hydroxymethylbilane + 4 NH4(+). It functions in the pathway porphyrin-containing compound metabolism; protoporphyrin-IX biosynthesis; coproporphyrinogen-III from 5-aminolevulinate: step 2/4. In terms of biological role, tetrapolymerization of the monopyrrole PBG into the hydroxymethylbilane pre-uroporphyrinogen in several discrete steps. In Francisella tularensis subsp. tularensis (strain WY96-3418), this protein is Porphobilinogen deaminase.